A 192-amino-acid chain; its full sequence is Imidazoleglycerol-phosphate dehydratase (192 aa).

It belongs to the imidazoleglycerol-phosphate dehydratase family.

The protein resides in the cytoplasm. It carries out the reaction D-erythro-1-(imidazol-4-yl)glycerol 3-phosphate = 3-(imidazol-4-yl)-2-oxopropyl phosphate + H2O. It functions in the pathway amino-acid biosynthesis; L-histidine biosynthesis; L-histidine from 5-phospho-alpha-D-ribose 1-diphosphate: step 6/9. The chain is Imidazoleglycerol-phosphate dehydratase from Carboxydothermus hydrogenoformans (strain ATCC BAA-161 / DSM 6008 / Z-2901).